Consider the following 1179-residue polypeptide: Serine/threonine-protein kinase pakG (1179 aa).

The stretch at 12–53 forms a coiled coil; it reads SKTNEDIELIKQKLKEDRELLEKERAQFEEERKIIFESLNKV. Residues 111 to 124 form the CRIB domain; sequence IGTPFNVQHKVHVD. The Protein kinase domain occupies 139 to 390; it reads FLIDCILGTG…AIELLTHPFL (252 aa). ATP contacts are provided by residues 145–153 and Lys-168; that span reads LGTGSYGTV. Asp-257 serves as the catalytic Proton acceptor. Disordered regions lie at residues 414 to 469, 589 to 631, 705 to 1086, and 1121 to 1179; these read KKKK…SSLD, IGNS…NNNN, SSSS…PITL, and TEIN…SPKK. Residues 621-668 adopt a coiled-coil conformation; the sequence is NNNNNNNNNNNEFLINQIKKELILDFNENMKQYINQQLTNLKEEMLKE. 2 stretches are compositionally biased toward low complexity: residues 705–723 and 743–761; these read SSSSSSSFLNSSPSSSNSS and LPPSQQSTPVTTTTTTSSP. Residues 762–776 are compositionally biased toward pro residues; it reads SPSPSPSPSPSPSSP. Composition is skewed to low complexity over residues 777–788 and 812–833; these read LPSSSTSTVNTP and NNNNTNNNNNNNNSNNNNNNNN. The span at 834–857 shows a compositional bias: polar residues; that stretch reads VIQSPKLNNRPLSPTTPTKQFNNR. Residues 864–891 show a composition bias toward low complexity; it reads FNNRPPSPSKFNNRPPSPSNRPLSPKNS. Residues 892-946 show a composition bias toward polar residues; sequence YNSLEKSNNGSISNNRPLSPKNSLEKSTTQNNTSSEDISTTTVTVTSEQGGTPIT. Over residues 954 to 963 the composition is skewed to pro residues; that stretch reads RPKPSPPPIP. 3 stretches are compositionally biased toward low complexity: residues 964-997, 1024-1046, and 1053-1077; these read MNKSSPKRAPSPSSNRRLSSSFTAQSSTASTIAA, TTITSSTNSPIKPLSPLNKSPNS, and ITTSNISNNSNINNNNNNNSNSSSN. Over residues 1121–1135 the composition is skewed to polar residues; it reads TEINLPSSSPSTPQK. A compositionally biased stretch (low complexity) spans 1137–1158; sequence NTPSSIPTTPTTPTTNGGSVSS.

Belongs to the protein kinase superfamily. STE Ser/Thr protein kinase family. STE20 subfamily. The cofactor is Mg(2+).

It carries out the reaction L-seryl-[protein] + ATP = O-phospho-L-seryl-[protein] + ADP + H(+). The enzyme catalyses L-threonyl-[protein] + ATP = O-phospho-L-threonyl-[protein] + ADP + H(+). In Dictyostelium discoideum (Social amoeba), this protein is Serine/threonine-protein kinase pakG.